The primary structure comprises 41 residues: NVSLITAFDNLDLSRKGAYYLYYLLSERLKRGGVPVHVNRA.

It belongs to the herpesviridae UL21 family.

The polypeptide is Protein UL21 homolog (Equine herpesvirus 4 (strain 1942) (EHV-4)).